We begin with the raw amino-acid sequence, 417 residues long: MQTYLVGGAVRDYLLGLPVKDRDWVVVGADAQTMLAQGFQPVGKDFPVFLHPETHEEYALARTERKTAKGYVGFSFHADKDVTLEQDLMRRDLTINAMAQDADGKIIDPFGGQRDLAAGILRHVSPAFAEDPVRILRTARFAARYKFEIAEETIKLMRQMVENGEADALVAERVWQEFAKGLMEKNPRKMIEVLRECGALKVLLPEVNALFGVPQRADYHPEIDSGIHTLMTLQRAADMGLSLPERYAALLHDLGKAKTPSDILPRHHGHDLAGVEPVREVNQRLRAPKHCAELAELVCRWHIIFHQVGQLKSQTILNVLKKTDAFRRPERFQTALNVCIADTQGRLNREHTPYPQRAHWLALLEAANQADSGKIAAECRAQGKAHLIAEQIDRARLAQIAPLQKAFRAAQDKTEKH.

ATP is bound by residues Gly-8 and Arg-11. Residues Gly-8 and Arg-11 each contribute to the CTP site. Residues Asp-21 and Asp-23 each coordinate Mg(2+). Residues Arg-91, Arg-137, and Arg-140 each contribute to the ATP site. Positions 91, 137, and 140 each coordinate CTP. The 102-residue stretch at 225–326 folds into the HD domain; the sequence is SGIHTLMTLQ…LNVLKKTDAF (102 aa).

This sequence belongs to the tRNA nucleotidyltransferase/poly(A) polymerase family. Bacterial CCA-adding enzyme type 1 subfamily. Monomer. Can also form homodimers and oligomers. Mg(2+) serves as cofactor. Ni(2+) is required as a cofactor.

The catalysed reaction is a tRNA precursor + 2 CTP + ATP = a tRNA with a 3' CCA end + 3 diphosphate. It carries out the reaction a tRNA with a 3' CCA end + 2 CTP + ATP = a tRNA with a 3' CCACCA end + 3 diphosphate. Functionally, catalyzes the addition and repair of the essential 3'-terminal CCA sequence in tRNAs without using a nucleic acid template. Adds these three nucleotides in the order of C, C, and A to the tRNA nucleotide-73, using CTP and ATP as substrates and producing inorganic pyrophosphate. tRNA 3'-terminal CCA addition is required both for tRNA processing and repair. Also involved in tRNA surveillance by mediating tandem CCA addition to generate a CCACCA at the 3' terminus of unstable tRNAs. While stable tRNAs receive only 3'-terminal CCA, unstable tRNAs are marked with CCACCA and rapidly degraded. The polypeptide is Multifunctional CCA protein (Neisseria meningitidis serogroup B (strain ATCC BAA-335 / MC58)).